The chain runs to 318 residues: Biotin synthase (318 aa).

One can recognise a Radical SAM core domain in the interval 44–273 (LCGNKFDLCT…TVQIRLAGGR (230 aa)). [4Fe-4S] cluster contacts are provided by Cys-62, Cys-66, and Cys-69. Residues Ser-106, Cys-138, Cys-198, and Arg-268 each coordinate [2Fe-2S] cluster.

This sequence belongs to the radical SAM superfamily. Biotin synthase family. As to quaternary structure, homodimer. [4Fe-4S] cluster is required as a cofactor. It depends on [2Fe-2S] cluster as a cofactor.

The enzyme catalyses (4R,5S)-dethiobiotin + (sulfur carrier)-SH + 2 reduced [2Fe-2S]-[ferredoxin] + 2 S-adenosyl-L-methionine = (sulfur carrier)-H + biotin + 2 5'-deoxyadenosine + 2 L-methionine + 2 oxidized [2Fe-2S]-[ferredoxin]. It functions in the pathway cofactor biosynthesis; biotin biosynthesis; biotin from 7,8-diaminononanoate: step 2/2. In terms of biological role, catalyzes the conversion of dethiobiotin (DTB) to biotin by the insertion of a sulfur atom into dethiobiotin via a radical-based mechanism. The polypeptide is Biotin synthase (Clostridium botulinum (strain Hall / ATCC 3502 / NCTC 13319 / Type A)).